The following is a 422-amino-acid chain: UDP-N-acetylglucosamine 1-carboxyvinyltransferase (422 aa).

Lysine 22 to asparagine 23 provides a ligand contact to phosphoenolpyruvate. A UDP-N-acetyl-alpha-D-glucosamine-binding site is contributed by arginine 95. Cysteine 119 (proton donor) is an active-site residue. Cysteine 119 is modified (2-(S-cysteinyl)pyruvic acid O-phosphothioketal). Residues arginine 124–glutamine 128, aspartate 309, and valine 331 contribute to the UDP-N-acetyl-alpha-D-glucosamine site.

Belongs to the EPSP synthase family. MurA subfamily.

The protein localises to the cytoplasm. The enzyme catalyses phosphoenolpyruvate + UDP-N-acetyl-alpha-D-glucosamine = UDP-N-acetyl-3-O-(1-carboxyvinyl)-alpha-D-glucosamine + phosphate. It participates in cell wall biogenesis; peptidoglycan biosynthesis. Functionally, cell wall formation. Adds enolpyruvyl to UDP-N-acetylglucosamine. This chain is UDP-N-acetylglucosamine 1-carboxyvinyltransferase, found in Anaeromyxobacter dehalogenans (strain 2CP-C).